The sequence spans 130 residues: Mediator of RNA polymerase II transcription subunit 10 (130 aa).

It belongs to the Mediator complex subunit 10 family. As to quaternary structure, component of the Mediator complex.

It localises to the nucleus. Functionally, component of the Mediator complex, a coactivator involved in the regulated transcription of nearly all RNA polymerase II-dependent genes. Mediator functions as a bridge to convey information from gene-specific regulatory proteins to the basal RNA polymerase II transcription machinery. Mediator is recruited to promoters by direct interactions with regulatory proteins and serves as a scaffold for the assembly of a functional preinitiation complex with RNA polymerase II and the general transcription factors. In Anopheles gambiae (African malaria mosquito), this protein is Mediator of RNA polymerase II transcription subunit 10 (MED10).